The following is a 209-amino-acid chain: Uracil phosphoribosyltransferase (209 aa).

Residues R79, R104, and 131–139 (DPMLATGGS) each bind 5-phospho-alpha-D-ribose 1-diphosphate. Residues I194 and 199–201 (GDA) contribute to the uracil site. D200 contributes to the 5-phospho-alpha-D-ribose 1-diphosphate binding site.

It belongs to the UPRTase family. It depends on Mg(2+) as a cofactor.

The enzyme catalyses UMP + diphosphate = 5-phospho-alpha-D-ribose 1-diphosphate + uracil. It participates in pyrimidine metabolism; UMP biosynthesis via salvage pathway; UMP from uracil: step 1/1. Allosterically activated by GTP. Functionally, catalyzes the conversion of uracil and 5-phospho-alpha-D-ribose 1-diphosphate (PRPP) to UMP and diphosphate. This Lactobacillus delbrueckii subsp. bulgaricus (strain ATCC 11842 / DSM 20081 / BCRC 10696 / JCM 1002 / NBRC 13953 / NCIMB 11778 / NCTC 12712 / WDCM 00102 / Lb 14) protein is Uracil phosphoribosyltransferase.